A 360-amino-acid polypeptide reads, in one-letter code: MKDSIKQKLENLVERYDEVGALLGDPDIIADQKKFRDLGKEYSELEPVVICYQEYRTVIENIAEAKMLMNDGDADMREMAQEELKTAEAQLEPLETQLQKLLLPKDPNDEKNVFLEIRAGTGGDEAAIFSGDLFRMYSRYAERAGWRIEIISENAGEHGGYKELITRVVGQGVYSQLKFESGAHRVQRVPETESQGRIHTSACTVAIMPEADESEEVELNKGDLRIDTFRASGAGGQHVNKTDSAIRITHIPTGIVVECQDERSQHKNRAKAMSLLAARINSAQAEQFAAEQASERKSLVGSGDRSERIRTYNYPQGRVTDHRINLTLYKLDEIMEGSLDEVIQPLVNEHQADQLAALAN.

Q237 carries the N5-methylglutamine modification.

Belongs to the prokaryotic/mitochondrial release factor family. Post-translationally, methylated by PrmC. Methylation increases the termination efficiency of RF1.

It is found in the cytoplasm. Its function is as follows. Peptide chain release factor 1 directs the termination of translation in response to the peptide chain termination codons UAG and UAA. This chain is Peptide chain release factor 1, found in Teredinibacter turnerae (strain ATCC 39867 / T7901).